The sequence spans 331 residues: 6-phosphogluconolactonase (331 aa).

N6-acetyllysine is present on Lys287.

It belongs to the cycloisomerase 2 family.

It carries out the reaction 6-phospho-D-glucono-1,5-lactone + H2O = 6-phospho-D-gluconate + H(+). The protein operates within carbohydrate degradation; pentose phosphate pathway; D-ribulose 5-phosphate from D-glucose 6-phosphate (oxidative stage): step 2/3. In terms of biological role, catalyzes the hydrolysis of 6-phosphogluconolactone to 6-phosphogluconate. The polypeptide is 6-phosphogluconolactonase (Shigella boydii serotype 18 (strain CDC 3083-94 / BS512)).